The following is a 204-amino-acid chain: Somatotropin (204 aa).

A signal peptide spans 1–17 (MNSVVLQLSVVCLGVSS). Pyrrolidone carboxylic acid is present on Gln-18. His-36 is a Zn(2+) binding site. Cys-69 and Cys-177 are disulfide-bonded. Position 186 (Glu-186) interacts with Zn(2+). An intrachain disulfide couples Cys-194 to Cys-202.

The protein belongs to the somatotropin/prolactin family.

It localises to the secreted. Its function is as follows. Growth hormone plays an important role in growth control and involved in the regulation of several anabolic processes. The sequence is that of Somatotropin (gh) from Oreochromis mossambicus (Mozambique tilapia).